Reading from the N-terminus, the 280-residue chain is F420-dependent methylenetetrahydromethanopterin dehydrogenase (280 aa).

The protein belongs to the MTD family.

It catalyses the reaction 5,10-methylenetetrahydromethanopterin + oxidized coenzyme F420-(gamma-L-Glu)(n) + 2 H(+) = 5,10-methenyl-5,6,7,8-tetrahydromethanopterin + reduced coenzyme F420-(gamma-L-Glu)(n). The protein operates within one-carbon metabolism; methanogenesis from CO(2); 5,10-methylene-5,6,7,8-tetrahydromethanopterin from 5,10-methenyl-5,6,7,8-tetrahydromethanopterin (coenzyme F420 route): step 1/1. Functionally, catalyzes the reversible reduction of methenyl-H(4)MPT(+) to methylene-H(4)MPT. This is F420-dependent methylenetetrahydromethanopterin dehydrogenase from Methanospirillum hungatei JF-1 (strain ATCC 27890 / DSM 864 / NBRC 100397 / JF-1).